Consider the following 341-residue polypeptide: S-adenosylmethionine:tRNA ribosyltransferase-isomerase (341 aa).

It belongs to the QueA family. In terms of assembly, monomer.

The protein localises to the cytoplasm. It catalyses the reaction 7-aminomethyl-7-carbaguanosine(34) in tRNA + S-adenosyl-L-methionine = epoxyqueuosine(34) in tRNA + adenine + L-methionine + 2 H(+). The protein operates within tRNA modification; tRNA-queuosine biosynthesis. Its function is as follows. Transfers and isomerizes the ribose moiety from AdoMet to the 7-aminomethyl group of 7-deazaguanine (preQ1-tRNA) to give epoxyqueuosine (oQ-tRNA). This chain is S-adenosylmethionine:tRNA ribosyltransferase-isomerase, found in Staphylococcus haemolyticus (strain JCSC1435).